A 772-amino-acid chain; its full sequence is Acyl-homoserine lactone acylase PvdQ (772 aa).

The signal sequence occupies residues 1 to 28 (MPVFPFCRPMTCAGLAAALVAFSVGVQA). Residues 199–220 (AQSSAGFASALARQERFAAERG) constitute a propeptide, spacer peptide. The Nucleophile role is filled by Ser221.

This sequence belongs to the peptidase S45 family. Heterodimer of an alpha subunit and a beta subunit processed from the same precursor.

It localises to the periplasm. It catalyses the reaction an N-acyl-L-homoserine lactone + H2O = L-homoserine lactone + a carboxylate. Its function is as follows. Catalyzes the deacylation of acyl-homoserine lactone (AHL or acyl-HSL), releasing homoserine lactone (HSL) and the corresponding fatty acid. Possesses a specificity for the degradation of long-chain acyl-HSLs (side chains of 11 to 14 carbons in length). This is Acyl-homoserine lactone acylase PvdQ (pvdQ) from Pseudomonas putida (strain ATCC 47054 / DSM 6125 / CFBP 8728 / NCIMB 11950 / KT2440).